A 31-amino-acid chain; its full sequence is Cytochrome b6-f complex subunit 6 (31 aa).

The chain crosses the membrane as a helical span at residues 4-26; it reads ITSYFGFLLAASTITPALLIGLS.

Belongs to the PetL family. The 4 large subunits of the cytochrome b6-f complex are cytochrome b6, subunit IV (17 kDa polypeptide, PetD), cytochrome f and the Rieske protein, while the 4 small subunits are PetG, PetL, PetM and PetN. The complex functions as a dimer.

It localises to the plastid. It is found in the chloroplast thylakoid membrane. Its function is as follows. Component of the cytochrome b6-f complex, which mediates electron transfer between photosystem II (PSII) and photosystem I (PSI), cyclic electron flow around PSI, and state transitions. PetL is important for photoautotrophic growth as well as for electron transfer efficiency and stability of the cytochrome b6-f complex. The sequence is that of Cytochrome b6-f complex subunit 6 from Illicium oligandrum (Star anise).